A 761-amino-acid chain; its full sequence is Xaa-Pro dipeptidyl-peptidase (761 aa).

Residues Ser-349, Asp-469, and His-499 each act as charge relay system in the active site.

It belongs to the peptidase S15 family. Homodimer.

Its subcellular location is the cytoplasm. The enzyme catalyses Hydrolyzes Xaa-Pro-|- bonds to release unblocked, N-terminal dipeptides from substrates including Ala-Pro-|-p-nitroanilide and (sequentially) Tyr-Pro-|-Phe-Pro-|-Gly-Pro-|-Ile.. In terms of biological role, removes N-terminal dipeptides sequentially from polypeptides having unsubstituted N-termini provided that the penultimate residue is proline. In Streptococcus equi subsp. zooepidemicus (strain H70), this protein is Xaa-Pro dipeptidyl-peptidase.